The chain runs to 762 residues: Cellulose synthase-like protein H2 (762 aa).

Residues Met1–Arg15 show a composition bias toward low complexity. Residues Met1 to Arg39 are disordered. 2 consecutive transmembrane segments (helical) span residues Ala47 to Leu67 and Gly81 to Val101. Residues Asp180 and Asp470 contribute to the active site. Transmembrane regions (helical) follow at residues Leu541–Leu561, Phe582–Ala602, Ile619–Leu639, Leu673–Gly693, Ala708–Val728, and Gly739–Cys759.

This sequence belongs to the glycosyltransferase 2 family. Plant cellulose synthase-like H subfamily.

The protein localises to the golgi apparatus membrane. In terms of biological role, thought to be a Golgi-localized beta-glycan synthase that polymerize the backbones of noncellulosic polysaccharides (hemicelluloses) of plant cell wall. The polypeptide is Cellulose synthase-like protein H2 (CSLH2) (Oryza sativa subsp. indica (Rice)).